A 163-amino-acid polypeptide reads, in one-letter code: Troponin C (163 aa).

Residue Ser1 is modified to N-acetylserine. 4 EF-hand domains span residues 14 to 49 (EQISEFKMAFDMFDEDGGGDISTKELGTIMKRLGMS), 50 to 85 (ISREELQQMIDEVDEDASGTIDFEEFLEMMARAMQD), 90 to 125 (IPDDELRAAFRVLDKNGDGFIDKDEFRALASECAGD), and 127 to 162 (LTDDELLEFMMDYDGNRDGRFDYEEWKEIIQELKVR). Lys20 bears the N6,N6-dimethyllysine; alternate mark. Lys20 carries the post-translational modification N6-methyllysine; alternate. Ca(2+) is bound by residues Asp27, Asp29, Asp33, Glu38, Asp63, Asp65, Ser67, Thr69, Glu74, Asp103, Asn105, Asp107, and Glu114.

The protein belongs to the troponin C family.

Its function is as follows. Troponin is the central regulatory protein of striated muscle contraction. Tn consists of three components: Tn-I which is the inhibitor of actomyosin ATPase, Tn-T which contains the binding site for tropomyosin and Tn-C. The binding of calcium to Tn-C abolishes the inhibitory action of Tn on actin filaments. This is Troponin C from Branchiostoma lanceolatum (Common lancelet).